Here is a 116-residue protein sequence, read N- to C-terminus: MPRIKRGNVAVKRRKKILKRAKGFRGTHSKLFRVANQQVMKALRYAYVGRKRKKREFRSLWITRINAAARLNGTKYSSVIHSLKESKIAINRKMLAQMAVADPDSFVKVLSSAKAS.

It belongs to the bacterial ribosomal protein bL20 family.

It localises to the plastid. Its subcellular location is the chloroplast. Functionally, binds directly to 23S ribosomal RNA and is necessary for the in vitro assembly process of the 50S ribosomal subunit. It is not involved in the protein synthesizing functions of that subunit. The chain is Large ribosomal subunit protein bL20c from Rhodomonas salina (Cryptomonas salina).